Consider the following 52-residue polypeptide: uncharacterized protein (52 aa).

The tract at residues 1-52 is disordered; it reads MSLRPCLTPSSMQYSDIYIPTPTPTHHTHTPTPHPHPHTHTHTHHNPNPTLF. Positions 35–45 are enriched in basic residues; it reads PHPHTHTHTHH.

This is an uncharacterized protein from Saccharomyces cerevisiae (strain ATCC 204508 / S288c) (Baker's yeast).